The sequence spans 283 residues: ATP phosphoribosyltransferase (283 aa).

This sequence belongs to the ATP phosphoribosyltransferase family. Long subfamily. It depends on Mg(2+) as a cofactor.

The protein localises to the cytoplasm. The enzyme catalyses 1-(5-phospho-beta-D-ribosyl)-ATP + diphosphate = 5-phospho-alpha-D-ribose 1-diphosphate + ATP. It participates in amino-acid biosynthesis; L-histidine biosynthesis; L-histidine from 5-phospho-alpha-D-ribose 1-diphosphate: step 1/9. Its activity is regulated as follows. Feedback inhibited by histidine. In terms of biological role, catalyzes the condensation of ATP and 5-phosphoribose 1-diphosphate to form N'-(5'-phosphoribosyl)-ATP (PR-ATP). Has a crucial role in the pathway because the rate of histidine biosynthesis seems to be controlled primarily by regulation of HisG enzymatic activity. The chain is ATP phosphoribosyltransferase from Rhodococcus opacus (strain B4).